Here is a 95-residue protein sequence, read N- to C-terminus: Aspartyl/glutamyl-tRNA(Asn/Gln) amidotransferase subunit C (95 aa).

Belongs to the GatC family. In terms of assembly, heterotrimer of A, B and C subunits.

The catalysed reaction is L-glutamyl-tRNA(Gln) + L-glutamine + ATP + H2O = L-glutaminyl-tRNA(Gln) + L-glutamate + ADP + phosphate + H(+). It carries out the reaction L-aspartyl-tRNA(Asn) + L-glutamine + ATP + H2O = L-asparaginyl-tRNA(Asn) + L-glutamate + ADP + phosphate + 2 H(+). Allows the formation of correctly charged Asn-tRNA(Asn) or Gln-tRNA(Gln) through the transamidation of misacylated Asp-tRNA(Asn) or Glu-tRNA(Gln) in organisms which lack either or both of asparaginyl-tRNA or glutaminyl-tRNA synthetases. The reaction takes place in the presence of glutamine and ATP through an activated phospho-Asp-tRNA(Asn) or phospho-Glu-tRNA(Gln). This Pseudomonas putida (strain ATCC 700007 / DSM 6899 / JCM 31910 / BCRC 17059 / LMG 24140 / F1) protein is Aspartyl/glutamyl-tRNA(Asn/Gln) amidotransferase subunit C.